The sequence spans 105 residues: Large ribosomal subunit protein bL21 (105 aa).

Belongs to the bacterial ribosomal protein bL21 family. Part of the 50S ribosomal subunit. Contacts protein L20.

Functionally, this protein binds to 23S rRNA in the presence of protein L20. The chain is Large ribosomal subunit protein bL21 from Parafrankia sp. (strain EAN1pec).